A 118-amino-acid chain; its full sequence is GRB2-related adapter protein-like (118 aa).

One can recognise an SH3 domain in the interval 1–58 (MESVALYSFQATESDELAFNKGDTLKILNMEDDQNWYKAELRGVEGFIPKNYIRVKPH). One can recognise an SH2 domain in the interval 60–118 (WYSGRISRQLAEEILMKRNHLGAFLIRESESSPGEFSVSVNNRAQRGPCLGPKSHSRLG). The disordered stretch occupies residues 89–118 (ESSPGEFSVSVNNRAQRGPCLGPKSHSRLG). A compositionally biased stretch (polar residues) spans 90–103 (SSPGEFSVSVNNRA).

Belongs to the GRB2/sem-5/DRK family.

This Homo sapiens (Human) protein is GRB2-related adapter protein-like (GRAPL).